Reading from the N-terminus, the 215-residue chain is 3-demethoxyubiquinol 3-hydroxylase (215 aa).

The Fe cation site is built by glutamate 64, glutamate 94, histidine 97, glutamate 146, glutamate 178, and histidine 181.

This sequence belongs to the COQ7 family. The cofactor is Fe cation.

Its subcellular location is the cell membrane. The catalysed reaction is a 5-methoxy-2-methyl-3-(all-trans-polyprenyl)benzene-1,4-diol + AH2 + O2 = a 3-demethylubiquinol + A + H2O. It functions in the pathway cofactor biosynthesis; ubiquinone biosynthesis. Functionally, catalyzes the hydroxylation of 2-nonaprenyl-3-methyl-6-methoxy-1,4-benzoquinol during ubiquinone biosynthesis. The chain is 3-demethoxyubiquinol 3-hydroxylase from Pseudomonas putida (strain W619).